Reading from the N-terminus, the 349-residue chain is N-acetyltaurine hydrolase (349 aa).

A divalent metal cation contacts are provided by histidine 26, histidine 28, glutamate 169, histidine 201, histidine 230, and aspartate 298.

It belongs to the metallo-dependent hydrolases superfamily. Phosphotriesterase family. A divalent metal cation serves as cofactor. Expressed in the kidney, liver and brainstem.

The protein localises to the cytoplasm. It localises to the cytosol. The catalysed reaction is N-acetyltaurine + H2O = taurine + acetate. It carries out the reaction N-propanoyltaurine + H2O = propanoate + taurine. The enzyme catalyses N-acetyl-L-methionine + H2O = L-methionine + acetate. It catalyses the reaction N-acetyl-L-isoleucine + H2O = L-isoleucine + acetate. The catalysed reaction is N-acetyl-L-leucine + H2O = L-leucine + acetate. It carries out the reaction N-acetyl-L-valine + H2O = L-valine + acetate. In terms of biological role, N-acetyltaurine hydrolase that regulates feeding by catalyzing the hydrolysis of N-acetyltaurine into taurine and acetate. N-acetyltaurine has anorexigenic and anti-obesity effects that are dependent on GFRAL receptor and GDF15. PTER also acts on other N-acetyl amino acids (Met, Ile, Leu, Val) and N-propionyltaurine, but at lower rates. This Mus musculus (Mouse) protein is N-acetyltaurine hydrolase.